We begin with the raw amino-acid sequence, 263 residues long: Small ribosomal subunit protein eS4 (263 aa).

In terms of domain architecture, S4 RNA-binding spans 42-104 (LPLIVFLRNR…TGEHFRLVYD (63 aa)).

It belongs to the eukaryotic ribosomal protein eS4 family.

This is Small ribosomal subunit protein eS4 (RPS4Y1) from Pan paniscus (Pygmy chimpanzee).